A 58-amino-acid polypeptide reads, in one-letter code: UPF0391 membrane protein OCAR_5266/OCA5_c27040 (58 aa).

A run of 2 helical transmembrane segments spans residues tryptophan 4–alanine 24 and isoleucine 30–leucine 50.

This sequence belongs to the UPF0391 family.

It is found in the cell membrane. This chain is UPF0391 membrane protein OCAR_5266/OCA5_c27040, found in Afipia carboxidovorans (strain ATCC 49405 / DSM 1227 / KCTC 32145 / OM5) (Oligotropha carboxidovorans).